A 28-amino-acid chain; its full sequence is uncharacterized protein (28 aa).

Its subcellular location is the cell inner membrane. This is an uncharacterized protein from Escherichia coli (strain K12).